A 347-amino-acid chain; its full sequence is Probable replication factor C subunit 5 (347 aa).

ATP is bound at residue 64–71 (GPPGTGKT).

The protein belongs to the activator 1 small subunits family. As to quaternary structure, heteropentamer of various rfc subunits that forms a complex (RFC) with PCNA in the presence of ATP.

The protein resides in the nucleus. The elongation of primed DNA templates by DNA polymerase delta and epsilon requires the action of the accessory proteins PCNA and activator 1. In Dictyostelium discoideum (Social amoeba), this protein is Probable replication factor C subunit 5 (rfc5).